The sequence spans 1082 residues: uncharacterized protein (1082 aa).

Residues 50–319 (TTMTGGVSLA…LDNRPIGVLF (270 aa)) enclose the PNPLA domain. The GXSXG signature appears at 120 to 124 (GTSAG). The Nucleophile role is filled by Ser122. Asp306 acts as the Proton acceptor in catalysis. Residues 306–308 (DGG) carry the DGA/G motif. 4 consecutive transmembrane segments (helical) span residues 959-979 (IARS…AAAI), 982-1002 (VTVF…LVVL), 1012-1032 (LFAL…TPVV), and 1057-1077 (WWHP…IAAA).

Its subcellular location is the cell membrane. This is an uncharacterized protein from Mycobacterium tuberculosis (strain ATCC 25618 / H37Rv).